The primary structure comprises 837 residues: Ribosome-releasing factor 2, mitochondrial (837 aa).

The transit peptide at 1 to 29 directs the protein to the mitochondrion; it reads MFSINARTKVPIWVPFIARKGFSMSTRQL. A tr-type G domain is found at 40–331; that stretch reads LNTRNIGIIA…GVVDYLPSPL (292 aa). GTP contacts are provided by residues 49–56, 113–117, and 167–170; these read AHIDAGKT, DTPGH, and NKMD. The tract at residues 338–359 is disordered; sequence ITASTSKVSKKQKQKKNSKVSS. The span at 345–355 shows a compositional bias: basic residues; sequence VSKKQKQKKNS.

This sequence belongs to the TRAFAC class translation factor GTPase superfamily. Classic translation factor GTPase family. EF-G/EF-2 subfamily.

Its subcellular location is the mitochondrion. In terms of biological role, mitochondrial GTPase that mediates the disassembly of ribosomes from messenger RNA at the termination of mitochondrial protein biosynthesis. Not involved in the GTP-dependent ribosomal translocation step during translation elongation. This is Ribosome-releasing factor 2, mitochondrial from Meyerozyma guilliermondii (strain ATCC 6260 / CBS 566 / DSM 6381 / JCM 1539 / NBRC 10279 / NRRL Y-324) (Yeast).